Here is a 434-residue protein sequence, read N- to C-terminus: Pyrichalasin H cluster regulator BC2 (434 aa).

Disordered stretches follow at residues 297 to 321 (GSSPSGTPESELTSPHKRATTCSPL) and 362 to 383 (HPGHEDHQQQQEEVKQHDRLSH). Positions 298-309 (SSPSGTPESELT) are enriched in polar residues. Over residues 362 to 380 (HPGHEDHQQQQEEVKQHDR) the composition is skewed to basic and acidic residues.

It localises to the nucleus. Its function is as follows. Transcription factor probably involved in regulation of gene cluster that mediates the biosynthesis of a tyrosine-derived cytochalasan acting as a fungal signal recognized by resistant rice plants and leads to avirulence in Pi33 resistant rice cultivars. This is Pyrichalasin H cluster regulator BC2 from Pyricularia oryzae (strain 70-15 / ATCC MYA-4617 / FGSC 8958) (Rice blast fungus).